The chain runs to 473 residues: Photosystem II CP43 reaction center protein (473 aa).

Residues 1-14 (MKTLYSLRRFYHVE) constitute a propeptide that is removed on maturation. An N-acetylthreonine modification is found at Thr-15. Thr-15 is subject to Phosphothreonine. A run of 5 helical transmembrane segments spans residues 69 to 93 (LFEV…PHLA), 134 to 155 (LLGP…KDRN), 178 to 200 (KALY…RKIT), 255 to 275 (KPFA…LSYS), and 291 to 312 (WFNN…ASQA). Residue Glu-367 coordinates [CaMn4O5] cluster. Residues 447–471 (RARAAAAGFEKGIDRDFEPVLSMTP) traverse the membrane as a helical segment.

Belongs to the PsbB/PsbC family. PsbC subfamily. In terms of assembly, PSII is composed of 1 copy each of membrane proteins PsbA, PsbB, PsbC, PsbD, PsbE, PsbF, PsbH, PsbI, PsbJ, PsbK, PsbL, PsbM, PsbT, PsbX, PsbY, PsbZ, Psb30/Ycf12, at least 3 peripheral proteins of the oxygen-evolving complex and a large number of cofactors. It forms dimeric complexes. Binds multiple chlorophylls and provides some of the ligands for the Ca-4Mn-5O cluster of the oxygen-evolving complex. It may also provide a ligand for a Cl- that is required for oxygen evolution. PSII binds additional chlorophylls, carotenoids and specific lipids. is required as a cofactor.

Its subcellular location is the plastid. The protein localises to the chloroplast thylakoid membrane. Functionally, one of the components of the core complex of photosystem II (PSII). It binds chlorophyll and helps catalyze the primary light-induced photochemical processes of PSII. PSII is a light-driven water:plastoquinone oxidoreductase, using light energy to abstract electrons from H(2)O, generating O(2) and a proton gradient subsequently used for ATP formation. The chain is Photosystem II CP43 reaction center protein from Manihot esculenta (Cassava).